Reading from the N-terminus, the 512-residue chain is Maturase K (512 aa).

The protein belongs to the intron maturase 2 family. MatK subfamily.

Its subcellular location is the plastid. It localises to the chloroplast. Functionally, usually encoded in the trnK tRNA gene intron. Probably assists in splicing its own and other chloroplast group II introns. The protein is Maturase K of Zantedeschia aethiopica (White calla lily).